Consider the following 719-residue polypeptide: Protein Hook homolog 2 (719 aa).

A required for localization to the centrosome and induction of aggresome formation region spans residues 1 to 161 (MSVDKAELCG…ELMTKDTPDS (161 aa)). Positions 1 to 548 (MSVDKAELCG…LKRKLEEHLQ (548 aa)) are sufficient for interaction with microtubules. One can recognise a Calponin-homology (CH) domain in the interval 6-122 (AELCGSLLTW…KLLQLVLGCA (117 aa)). Ser-163 carries the post-translational modification Phosphoserine. 2 coiled-coil regions span residues 180–427 (LSEE…AQLQ) and 455–607 (AELR…VDKA). Thr-230 is modified (phosphothreonine). The tract at residues 533–719 (DAISILLKRK…SLNLRPTDKH (187 aa)) is required for localization to the centrosome and induction of aggresome formation. Positions 584–719 (HNLQKKDADL…SLNLRPTDKH (136 aa)) are sufficient for interaction with CNTRL. The disordered stretch occupies residues 696-719 (LATNSRRGPLGRLASLNLRPTDKH). Ser-710 bears the Phosphoserine mark.

This sequence belongs to the hook family. In terms of assembly, self-associates. Component of the FTS/Hook/FHIP complex (FHF complex), composed of AKTIP/FTS, FHIP1B, and one or more members of the Hook family of proteins HOOK1, HOOK2, and HOOK3. May interact directly with AKTIP/FTS, HOOK1 and HOOK3. Associates with several subunits of the homotypic vesicular sorting complex (the HOPS complex) including VPS16 and VPS41; these interactions may be indirect. Interacts with CNTRL. Interacts with microtubules. Interacts with ZC3H14. Interacts with LRGUK (via guanylate kinase-like domain). Interacts with CCDC181. Interacts with AP4M1; the interaction is direct, mediates the interaction between FTS-Hook-FHIP (FHF) complex and AP-4 and the perinuclear distribution of AP-4.

The protein resides in the cytoplasm. It is found in the cytoskeleton. The protein localises to the microtubule organizing center. Its subcellular location is the centrosome. It localises to the golgi apparatus. The protein resides in the trans-Golgi network. Its function is as follows. Component of the FTS/Hook/FHIP complex (FHF complex). The FHF complex may function to promote vesicle trafficking and/or fusion via the homotypic vesicular protein sorting complex (the HOPS complex). Contributes to the establishment and maintenance of centrosome function. May function in the positioning or formation of aggresomes, which are pericentriolar accumulations of misfolded proteins, proteasomes and chaperones. FHF complex promotes the distribution of AP-4 complex to the perinuclear area of the cell. This Homo sapiens (Human) protein is Protein Hook homolog 2 (HOOK2).